A 221-amino-acid chain; its full sequence is uncharacterized protein (221 aa).

Positions 1 to 16 are enriched in basic and acidic residues; sequence MESSRWDKDPPGERRP. The tract at residues 1–64 is disordered; it reads MESSRWDKDP…SHTPQTNTRR (64 aa).

This is an uncharacterized protein from Homo sapiens (Human).